The chain runs to 712 residues: Semaphorin-1A (712 aa).

The first 20 residues, 1 to 20 (MVVKILVWSICLIALCHAWM), serve as a signal peptide directing secretion. The region spanning 21 to 483 (PDSSSKLINH…GKDEIRLANL (463 aa)) is the Sema domain. Topologically, residues 21–601 (PDSSSKLINH…IGGCAVRQQL (581 aa)) are extracellular. 2 N-linked (GlcNAc...) asparagine glycosylation sites follow: asparagine 42 and asparagine 69. 2 cysteine pairs are disulfide-bonded: cysteine 95–cysteine 105 and cysteine 123–cysteine 132. N-linked (GlcNAc...) asparagine glycans are attached at residues asparagine 161 and asparagine 265. 4 disulfides stabilise this stretch: cysteine 242-cysteine 357, cysteine 266-cysteine 316, cysteine 486-cysteine 503, and cysteine 495-cysteine 512. The helical transmembrane segment at 602–622 (VIYTAGTLHIVVVVVSIVGLF) threads the bilayer. The Cytoplasmic segment spans residues 623–712 (SWLYSGLSVF…TLQKIKKTYI (90 aa)).

The protein belongs to the semaphorin family.

It is found in the membrane. Functionally, plays a role in growth cones guidance. The sequence is that of Semaphorin-1A (SEMA-1A) from Tribolium confusum (Confused flour beetle).